A 93-amino-acid polypeptide reads, in one-letter code: Sec-independent protein translocase protein TatA (93 aa).

A helical membrane pass occupies residues 1–21; the sequence is MGAMSPWHWAIVALVVVILFG. Residues 44 to 93 are disordered; it reads KEMQNDNSTPAPTAQQSAPAELPVADTTTAPVTPPAPVQPQPQHTEPKSA. Over residues 51–74 the composition is skewed to low complexity; the sequence is STPAPTAQQSAPAELPVADTTTAP.

Belongs to the TatA/E family. The Tat system comprises two distinct complexes: a TatABC complex, containing multiple copies of TatA, TatB and TatC subunits, and a separate TatA complex, containing only TatA subunits. Substrates initially bind to the TatABC complex, which probably triggers association of the separate TatA complex to form the active translocon.

It localises to the cell membrane. Part of the twin-arginine translocation (Tat) system that transports large folded proteins containing a characteristic twin-arginine motif in their signal peptide across membranes. TatA could form the protein-conducting channel of the Tat system. The polypeptide is Sec-independent protein translocase protein TatA (Rhodococcus opacus (strain B4)).